A 296-amino-acid chain; its full sequence is Light-independent protochlorophyllide reductase iron-sulfur ATP-binding protein (296 aa).

ATP-binding positions include 39–44 and K68; that span reads GIGKST. Residue S43 participates in Mg(2+) binding. [4Fe-4S] cluster contacts are provided by C124 and C158. Position 209–210 (209–210) interacts with ATP; it reads NR.

It belongs to the NifH/BchL/ChlL family. In terms of assembly, homodimer. Protochlorophyllide reductase is composed of three subunits; ChlL, ChlN and ChlB. The cofactor is [4Fe-4S] cluster.

It catalyses the reaction chlorophyllide a + oxidized 2[4Fe-4S]-[ferredoxin] + 2 ADP + 2 phosphate = protochlorophyllide a + reduced 2[4Fe-4S]-[ferredoxin] + 2 ATP + 2 H2O. It participates in porphyrin-containing compound metabolism; chlorophyll biosynthesis (light-independent). Functionally, component of the dark-operative protochlorophyllide reductase (DPOR) that uses Mg-ATP and reduced ferredoxin to reduce ring D of protochlorophyllide (Pchlide) to form chlorophyllide a (Chlide). This reaction is light-independent. The L component serves as a unique electron donor to the NB-component of the complex, and binds Mg-ATP. The protein is Light-independent protochlorophyllide reductase iron-sulfur ATP-binding protein of Synechococcus sp. (strain CC9605).